A 363-amino-acid polypeptide reads, in one-letter code: Peptide chain release factor 1 (363 aa).

N5-methylglutamine is present on Q237. A compositionally biased stretch (basic and acidic residues) spans 284–296 (EDEKRRSAEESTR). Positions 284-305 (EDEKRRSAEESTRRSLVASGDR) are disordered.

The protein belongs to the prokaryotic/mitochondrial release factor family. Post-translationally, methylated by PrmC. Methylation increases the termination efficiency of RF1.

Its subcellular location is the cytoplasm. In terms of biological role, peptide chain release factor 1 directs the termination of translation in response to the peptide chain termination codons UAG and UAA. The chain is Peptide chain release factor 1 from Shewanella sp. (strain MR-4).